The following is a 520-amino-acid chain: GMP synthase [glutamine-hydrolyzing] (520 aa).

The region spanning 9-202 (HVLIVDFGSQ…THKIAGLKGD (194 aa)) is the Glutamine amidotransferase type-1 domain. Catalysis depends on cysteine 86, which acts as the Nucleophile. Active-site residues include histidine 176 and glutamate 178. The GMPS ATP-PPase domain occupies 203–395 (WTMKAFREEA…LGLPPQFVGR (193 aa)). Residue 230–236 (SGGVDSS) participates in ATP binding.

As to quaternary structure, homodimer.

It carries out the reaction XMP + L-glutamine + ATP + H2O = GMP + L-glutamate + AMP + diphosphate + 2 H(+). It participates in purine metabolism; GMP biosynthesis; GMP from XMP (L-Gln route): step 1/1. In terms of biological role, catalyzes the synthesis of GMP from XMP. This chain is GMP synthase [glutamine-hydrolyzing], found in Phenylobacterium zucineum (strain HLK1).